Reading from the N-terminus, the 197-residue chain is Rac-like GTP-binding protein 5 (197 aa).

13–20 serves as a coordination point for GTP; that stretch reads GDGAVGKT. An Effector region motif is present at residues 35–43; that stretch reads YVPTVFDNF. GTP is bound by residues 60–64 and 118–121; these read DTAGQ and TKLD. Cys194 is modified (cysteine methyl ester). The S-geranylgeranyl cysteine moiety is linked to residue Cys194. The propeptide at 195-197 is removed in mature form; that stretch reads AIL.

Belongs to the small GTPase superfamily. Rho family.

Its subcellular location is the cytoplasm. It is found in the membrane. Inactive GDP-bound Rho GTPases reside in the cytosol, are found in a complex with Rho GDP-dissociation inhibitors (Rho GDIs), and are released from the GDI protein in order to translocate to membranes upon activation. The chain is Rac-like GTP-binding protein 5 (RAC5) from Oryza sativa subsp. japonica (Rice).